Consider the following 210-residue polypeptide: Claudin-4 (210 aa).

Over Met-1–Gln-7 the chain is Cytoplasmic. Positions Met-1–Lys-103 are interaction with EPHA2. A helical transmembrane segment spans residues Val-8 to Pro-28. At Met-29–Arg-81 the chain is on the extracellular side. An intrachain disulfide couples Cys-54 to Cys-64. The helical transmembrane segment at Ala-82–Gly-102 threads the bilayer. At Lys-103–Lys-116 the chain is on the cytoplasmic side. The chain crosses the membrane as a helical span at residues Ile-117–Ser-137. Over Trp-138–Met-160 the chain is Extracellular. A helical transmembrane segment spans residues Gly-161–Leu-181. The Cytoplasmic segment spans residues Cys-182 to Val-210. Tyr-209 carries the phosphotyrosine; by EPHA2 modification. The tract at residues Tyr-209 to Val-210 is interactions with TJP1, TJP2 and TJP3.

Belongs to the claudin family. In terms of assembly, can form heteropolymeric strands with other claudins. Interacts with CLDN8. Interacts with CLDN1. Directly interacts with TJP1/ZO-1, TJP2/ZO-2 and TJP3/ZO-3. Interacts with EPHA2; phosphorylates CLDN4 and may regulate tight junctions. Post-translationally, phosphorylated. Phosphorylation by EPHA2 is stimulated by EFNA1 and alters interaction with TJP1. Expressed primarily in lung and kidney. Present in both cortical and medullar collecting ducts (at protein level).

The protein localises to the cell junction. Its subcellular location is the tight junction. It localises to the cell membrane. The catalysed reaction is chloride(in) = chloride(out). The enzyme catalyses bromide(in) = bromide(out). It catalyses the reaction iodide(out) = iodide(in). It carries out the reaction fluoride(in) = fluoride(out). In terms of biological role, can associate with other claudins to regulate tight junction structural and functional strand dynamics. May coassemble with CLDN8 into tight junction strands containing anion-selective channels that convey paracellular chloride permeability in renal collecting ducts. May integrate into CLDN3 strands to modulate localized tight junction barrier properties. May disrupt strand assembly of channel-forming CLDN2 and CLDN15 and inhibit cation conductance. Cannot form tight junction strands on its own. This chain is Claudin-4, found in Mus musculus (Mouse).